Consider the following 259-residue polypeptide: Putative electron transfer flavoprotein subunit YgcR (259 aa).

It belongs to the ETF beta-subunit/FixA family. In terms of assembly, ygcQ and YgcR form a heterodimer.

Its function is as follows. May play a role in a redox process. This Escherichia coli (strain K12) protein is Putative electron transfer flavoprotein subunit YgcR (ygcR).